The chain runs to 92 residues: Small ribosomal subunit protein bS20 (92 aa).

A disordered region spans residues 1-23; that stretch reads MANSPSAKKRAKQAEKRRSHNAS. The span at 7 to 20 shows a compositional bias: basic residues; it reads AKKRAKQAEKRRSH.

This sequence belongs to the bacterial ribosomal protein bS20 family.

Its function is as follows. Binds directly to 16S ribosomal RNA. The chain is Small ribosomal subunit protein bS20 from Ectopseudomonas mendocina (strain ymp) (Pseudomonas mendocina).